We begin with the raw amino-acid sequence, 257 residues long: MSVPLILTLLAGAATFIGAFLGVLGQKPSNRVLAFSLGFAAGIMLLISLMEMLPAALDTEGMSPVLGYGMFIIGLLGYFGLDRLLPHAHPQDLVQKRQQPLPGSIKRTAILLTLGISLHNFPEGIATFVTASSNLELGFGIALAVALHNIPEGLAVAGPVYAATGSKRTAIFWAGISGMAEILGGVLAWLILGSLVSPIVMAAIMAAVAGIMVALSVDELMPLAKEIDPNNNPSYGVLCGMSIMGLSLVILQTIGIG.

A run of 8 helical transmembrane segments spans residues 5–25 (LILT…GVLG), 32–52 (VLAF…LMEM), 61–81 (GMSP…YFGL), 109–129 (AILL…ATFV), 137–157 (LGFG…LAVA), 171–191 (IFWA…AWLI), 195–215 (LVSP…MVAL), and 236–256 (GVLC…TIGI). Residues Asn120 and Glu123 each coordinate Fe(2+). Zn(2+)-binding residues include Glu123 and His148. Residues Asn149, Glu152, and Glu181 each contribute to the Fe(2+) site. Glu152 contacts Zn(2+).

The protein belongs to the ZIP transporter (TC 2.A.5) family. ZupT subfamily.

The protein localises to the cell inner membrane. It carries out the reaction Zn(2+)(in) = Zn(2+)(out). Its function is as follows. Mediates zinc uptake. May also transport other divalent cations. The polypeptide is Zinc transporter ZupT (Salmonella agona (strain SL483)).